The chain runs to 127 residues: Glycine cleavage system H protein (127 aa).

The region spanning 24-106 is the Lipoyl-binding domain; that stretch reads TATIGITDYA…YAEGWMLKLK (83 aa). The residue at position 65 (Lys-65) is an N6-lipoyllysine.

It belongs to the GcvH family. As to quaternary structure, the glycine cleavage system is composed of four proteins: P, T, L and H. Requires (R)-lipoate as cofactor.

In terms of biological role, the glycine cleavage system catalyzes the degradation of glycine. The H protein shuttles the methylamine group of glycine from the P protein to the T protein. The polypeptide is Glycine cleavage system H protein (Opitutus terrae (strain DSM 11246 / JCM 15787 / PB90-1)).